The chain runs to 498 residues: Protein YhjJ (498 aa).

The signal sequence occupies residues 1-24 (MQGTKIRLLAGGLLMMATAGYVQA).

This sequence belongs to the peptidase M16 family.

The protein localises to the periplasm. This chain is Protein YhjJ (yhjJ), found in Escherichia coli (strain K12).